A 60-amino-acid polypeptide reads, in one-letter code: U20-myrmicitoxin-Mri1a (60 aa).

The first 24 residues, 1 to 24 (MKSVILLFAVIAIIVAVIIPAING), serve as a signal peptide directing secretion. A propeptide spanning residues 25 to 34 (ESSSNPSANA) is cleaved from the precursor.

Belongs to the formicidae venom precursor-01 superfamily. Expressed by the venom gland.

It localises to the secreted. Functionally, induces paralysis 5 minutes after injection into blowflies (L.caesar), and then death within 24 hours. May have antimicrobial properties, like most ant linear peptides. The polypeptide is U20-myrmicitoxin-Mri1a (Manica rubida (European giant red ant)).